The following is a 544-amino-acid chain: Chaperonin GroEL (544 aa).

Residues threonine 30–proline 33, lysine 51, aspartate 87–threonine 91, glycine 415, asparagine 478–alanine 480, and aspartate 494 each bind ATP.

It belongs to the chaperonin (HSP60) family. Forms a cylinder of 14 subunits composed of two heptameric rings stacked back-to-back. Interacts with the co-chaperonin GroES.

Its subcellular location is the cytoplasm. It catalyses the reaction ATP + H2O + a folded polypeptide = ADP + phosphate + an unfolded polypeptide.. In terms of biological role, together with its co-chaperonin GroES, plays an essential role in assisting protein folding. The GroEL-GroES system forms a nano-cage that allows encapsulation of the non-native substrate proteins and provides a physical environment optimized to promote and accelerate protein folding. The chain is Chaperonin GroEL from Geobacter sulfurreducens (strain ATCC 51573 / DSM 12127 / PCA).